We begin with the raw amino-acid sequence, 172 residues long: WW domain binding protein VOPP1 (172 aa).

The N-terminal stretch at Met-1–Ala-22 is a signal peptide. The Extracellular portion of the chain corresponds to Lys-23–Leu-60. The chain crosses the membrane as a helical span at residues Trp-61–Ile-81. Topologically, residues Arg-82–Lys-172 are cytoplasmic. The tract at residues Arg-102–Pro-153 is disordered. Over residues Pro-104–Tyr-119 the composition is skewed to pro residues.

The protein belongs to the VOPP1/ECOP family. As to quaternary structure, interacts with WWOX (via WW domain). In terms of tissue distribution, widely expressed with highest levels in thymus and ovary.

It localises to the cytoplasmic vesicle membrane. Its subcellular location is the late endosome membrane. The protein localises to the lysosome membrane. Increases the transcriptional activity of NFKB1 by facilitating its nuclear translocation, DNA-binding and associated apoptotic response, when overexpressed. May sequester WWOX in lysosomal vesicles and thereby regulate WWOX role as tumor suppressor. This chain is WW domain binding protein VOPP1, found in Homo sapiens (Human).